The following is an 800-amino-acid chain: Nuclear cap-binding protein subunit 1 (800 aa).

The disordered stretch occupies residues 1–26 (MSRRRAHDTEDEGYDHRRNKRRRVSE). Thr9 bears the Phosphothreonine mark. The MIF4G domain occupies 31-243 (EDRLESLILR…CLWAQIRKLR (213 aa)). The disordered stretch occupies residues 669–700 (LAKADSSSSDSEDDSSHKRKKPITHADKPSEE).

It belongs to the NCBP1 family. Component of the nuclear cap-binding complex (CBC), a heterodimer composed of Cbp80 and Cbp20 that interacts with m7GpppG-capped RNA.

The protein localises to the nucleus. In terms of biological role, component of the cap-binding complex (CBC), which binds cotranscriptionally to the 5'-cap of pre-mRNAs and is involved in various processes such as pre-mRNA splicing and RNA-mediated gene silencing (RNAi). The CBC complex is involved in miRNA-mediated RNA interference via its interaction with Ars2 and is required for primary microRNAs (miRNAs) processing. Also involved in innate immunity via the short interfering RNAs (siRNAs) processing machinery by restricting the viral RNA production. In the CBC complex, Cbp80 does not bind directly capped RNAs (m7GpppG-capped RNA) but is required to stabilize the movement of the N-terminal loop of Cbp20 and lock the CBC into a high affinity cap-binding state with the cap structure. This Drosophila melanogaster (Fruit fly) protein is Nuclear cap-binding protein subunit 1 (Cbp80).